Here is a 211-residue protein sequence, read N- to C-terminus: Ras-related protein RABB1b (211 aa).

Residue 13–20 participates in GTP binding; the sequence is GDTGVGKS. The short motif at 35-43 is the Effector region element; that stretch reads HDLTIGVEF. Residues 61-65, 119-122, and 149-150 each bind GTP; these read DTAGQ, NKCD, and SA. 2 S-geranylgeranyl cysteine lipidation sites follow: C209 and C210.

Belongs to the small GTPase superfamily. Rab family.

It is found in the cell membrane. In terms of biological role, intracellular vesicle trafficking and protein transport. This Arabidopsis thaliana (Mouse-ear cress) protein is Ras-related protein RABB1b (RABB1B).